We begin with the raw amino-acid sequence, 502 residues long: Probable glycine dehydrogenase (decarboxylating) subunit 2 (502 aa).

Residue lysine 273 is modified to N6-(pyridoxal phosphate)lysine.

The protein belongs to the GcvP family. C-terminal subunit subfamily. In terms of assembly, the glycine cleavage system is composed of four proteins: P, T, L and H. In this organism, the P 'protein' is a heterodimer of two subunits. It depends on pyridoxal 5'-phosphate as a cofactor.

It catalyses the reaction N(6)-[(R)-lipoyl]-L-lysyl-[glycine-cleavage complex H protein] + glycine + H(+) = N(6)-[(R)-S(8)-aminomethyldihydrolipoyl]-L-lysyl-[glycine-cleavage complex H protein] + CO2. In terms of biological role, the glycine cleavage system catalyzes the degradation of glycine. The P protein binds the alpha-amino group of glycine through its pyridoxal phosphate cofactor; CO(2) is released and the remaining methylamine moiety is then transferred to the lipoamide cofactor of the H protein. This Pyrococcus horikoshii (strain ATCC 700860 / DSM 12428 / JCM 9974 / NBRC 100139 / OT-3) protein is Probable glycine dehydrogenase (decarboxylating) subunit 2.